We begin with the raw amino-acid sequence, 1203 residues long: DNA-directed RNA polymerase subunit beta (1203 aa).

Residues alanine 1174–alanine 1195 show a composition bias toward basic and acidic residues. Residues alanine 1174–glutamate 1203 are disordered.

It belongs to the RNA polymerase beta chain family. As to quaternary structure, the RNAP catalytic core consists of 2 alpha, 1 beta, 1 beta' and 1 omega subunit. When a sigma factor is associated with the core the holoenzyme is formed, which can initiate transcription.

It carries out the reaction RNA(n) + a ribonucleoside 5'-triphosphate = RNA(n+1) + diphosphate. Its function is as follows. DNA-dependent RNA polymerase catalyzes the transcription of DNA into RNA using the four ribonucleoside triphosphates as substrates. The sequence is that of DNA-directed RNA polymerase subunit beta from Streptococcus pneumoniae (strain ATCC 700669 / Spain 23F-1).